A 267-amino-acid chain; its full sequence is Undecaprenyl-diphosphatase (267 aa).

8 helical membrane passes run 1–21 (MTYFEAFFLALLQGFTEFLPI), 39–59 (QGLAFDVAVHVGTLAAVVIYF), 83–103 (SNLAWLIVLATIPAALFGLLF), 111–131 (LRSAWVIAATTIVFGLLLWWV), 149–169 (ALFLGIAQAMAMIPGTSRSGI), 189–209 (FLMSIPIITLAGSYLGLKLAM), 218–238 (LLSTGVIVSFISAYICIHFFL), and 246–266 (MMPFVIYRILLGSSLLVWLAL).

It belongs to the UppP family.

The protein resides in the cell inner membrane. The enzyme catalyses di-trans,octa-cis-undecaprenyl diphosphate + H2O = di-trans,octa-cis-undecaprenyl phosphate + phosphate + H(+). Catalyzes the dephosphorylation of undecaprenyl diphosphate (UPP). Confers resistance to bacitracin. In Aliivibrio fischeri (strain ATCC 700601 / ES114) (Vibrio fischeri), this protein is Undecaprenyl-diphosphatase.